A 444-amino-acid polypeptide reads, in one-letter code: MVEKFDTIYDYYVDKGYEPSKKRDIIAVFRVTPAEGYTIEQAAGAVAAESSTGTWTTLYPWYEQERWADLSAKAYDFHDMGDGSWIVRIAYPFHAFEEANLPGLLASIAGNIFGMKRVKGLRLEDLYFPEKLIREFDGPAFGIEGVRKMLEIKDRPIYGVVPKPKVGYSPEEFEKLAYDLLSNGADYMKDDENLTSPWYNRFEERAEIMAKIIDKVENETGEKKTWFANITADLLEMEQRLEVLADLGLKHAMVDVVITGWGALRYIRDLAADYGLAIHGHRAMHAAFTRNPYHGISMFVLAKLYRLIGIDQLHVGTAGAGKLEGGKWDVIQNARILRESHYKPDENDVFHLEQKFYSIKAAFPTSSGGLHPGNIQPVIEALGTDIVLQLGGGTLGHPDGPAAGARAVRQAIDAIMQGIPLDEYAKTHKELARALEKWGHVTPV.

Catalysis depends on Lys-163, which acts as the Proton acceptor. Lys-165 contributes to the substrate binding site. Mg(2+)-binding residues include Lys-189, Asp-191, and Glu-192. Lys-189 bears the N6-carboxylysine mark. His-281 serves as the catalytic Proton acceptor. Residues Arg-282, His-314, 367–369, and 389–392 each bind substrate; these read SGG and QLGG.

This sequence belongs to the RuBisCO large chain family. Type III subfamily. In terms of assembly, homodecamer, consisting of five dimer units which form a ring-like pentagonal structure. This arrangement is essential for its high thermostability. In contrast to form I RuBisCO, the form III RuBisCO is composed solely of large subunits. Mg(2+) is required as a cofactor.

The catalysed reaction is 2 (2R)-3-phosphoglycerate + 2 H(+) = D-ribulose 1,5-bisphosphate + CO2 + H2O. It carries out the reaction D-ribulose 1,5-bisphosphate + O2 = 2-phosphoglycolate + (2R)-3-phosphoglycerate + 2 H(+). Its function is as follows. Catalyzes the addition of molecular CO(2) and H(2)O to ribulose 1,5-bisphosphate (RuBP), generating two molecules of 3-phosphoglycerate (3-PGA). Functions in an archaeal AMP degradation pathway, together with AMP phosphorylase and R15P isomerase. The protein is Ribulose bisphosphate carboxylase of Thermococcus kodakarensis (strain ATCC BAA-918 / JCM 12380 / KOD1) (Pyrococcus kodakaraensis (strain KOD1)).